The primary structure comprises 176 residues: Ferritin heavy chain B (176 aa).

The Ferritin-like diiron domain occupies 7 to 156; that stretch reads QNFNSDCEAA…DYITNLKRLG (150 aa). 5 residues coordinate Fe cation: Glu24, Glu59, His62, Glu104, and Gln138.

This sequence belongs to the ferritin family. Oligomer of 24 subunits. There are two types of subunits: L (light) chain and H (heavy) chain. The functional molecule is roughly spherical and contains a central cavity into which the insoluble mineral iron core is deposited.

The protein resides in the cytoplasm. The enzyme catalyses 4 Fe(2+) + O2 + 4 H(+) = 4 Fe(3+) + 2 H2O. Its function is as follows. Stores iron in a soluble, non-toxic, readily available form. Important for iron homeostasis. Has ferroxidase activity. Iron is taken up in the ferrous form and deposited as ferric hydroxides after oxidation. This chain is Ferritin heavy chain B (fth1-b), found in Xenopus laevis (African clawed frog).